Here is a 266-residue protein sequence, read N- to C-terminus: MLTFVGLGLYDERSITVAGREALRSADRVFAEFYTSKLAGATVEELQNHHDIDIEVRDRAGVEQEPGPILDAAEAGGAVFLTAGDTMISTTHVDLRLRADNRGIETQIIHGTTAGAAAASLSGLQNYRFGKATTLPFPYAHGGEGVPGSVLDTIADNRKRGLHTLVYLDIKVGTGPRGPDPDHEEYMTADYAAELLAEDLDTVGVAIARAGSPDPVLAADRLSALADRSFGDPLHLLIVPGDLHVVEHDALVALAGAPESALPDPV.

Residues leucine 9, aspartate 85, isoleucine 88, 113 to 114, leucine 168, alanine 210, and histidine 235 each bind S-adenosyl-L-methionine; that span reads TA.

It belongs to the diphthine synthase family. In terms of assembly, homodimer.

The catalysed reaction is 2-[(3S)-amino-3-carboxypropyl]-L-histidyl-[translation elongation factor 2] + 3 S-adenosyl-L-methionine = diphthine-[translation elongation factor 2] + 3 S-adenosyl-L-homocysteine + 3 H(+). The protein operates within protein modification; peptidyl-diphthamide biosynthesis. Functionally, S-adenosyl-L-methionine-dependent methyltransferase that catalyzes the trimethylation of the amino group of the modified target histidine residue in translation elongation factor 2 (EF-2), to form an intermediate called diphthine. The three successive methylation reactions represent the second step of diphthamide biosynthesis. The polypeptide is Diphthine synthase (Natronomonas pharaonis (strain ATCC 35678 / DSM 2160 / CIP 103997 / JCM 8858 / NBRC 14720 / NCIMB 2260 / Gabara) (Halobacterium pharaonis)).